The following is a 239-amino-acid chain: tRNA1(Val) (adenine(37)-N6)-methyltransferase (239 aa).

The protein belongs to the methyltransferase superfamily. tRNA (adenine-N(6)-)-methyltransferase family.

It localises to the cytoplasm. The enzyme catalyses adenosine(37) in tRNA1(Val) + S-adenosyl-L-methionine = N(6)-methyladenosine(37) in tRNA1(Val) + S-adenosyl-L-homocysteine + H(+). In terms of biological role, specifically methylates the adenine in position 37 of tRNA(1)(Val) (anticodon cmo5UAC). The sequence is that of tRNA1(Val) (adenine(37)-N6)-methyltransferase from Vibrio campbellii (strain ATCC BAA-1116).